The chain runs to 421 residues: CinA-like protein (421 aa).

This sequence belongs to the CinA family.

The protein is CinA-like protein of Synechococcus sp. (strain ATCC 27144 / PCC 6301 / SAUG 1402/1) (Anacystis nidulans).